Reading from the N-terminus, the 271-residue chain is Formamidopyrimidine-DNA glycosylase (271 aa).

Catalysis depends on Pro2, which acts as the Schiff-base intermediate with DNA. Residue Glu3 is the Proton donor of the active site. Lys57 serves as the catalytic Proton donor; for beta-elimination activity. DNA contacts are provided by His90, Arg109, and Lys151. Residues 236–270 (HVYGRGGETCTQCGNLLSEIKLGQRATVFCGLCQP) form an FPG-type zinc finger. The active-site Proton donor; for delta-elimination activity is the Arg260.

This sequence belongs to the FPG family. As to quaternary structure, monomer. Zn(2+) serves as cofactor.

It catalyses the reaction Hydrolysis of DNA containing ring-opened 7-methylguanine residues, releasing 2,6-diamino-4-hydroxy-5-(N-methyl)formamidopyrimidine.. The enzyme catalyses 2'-deoxyribonucleotide-(2'-deoxyribose 5'-phosphate)-2'-deoxyribonucleotide-DNA = a 3'-end 2'-deoxyribonucleotide-(2,3-dehydro-2,3-deoxyribose 5'-phosphate)-DNA + a 5'-end 5'-phospho-2'-deoxyribonucleoside-DNA + H(+). Involved in base excision repair of DNA damaged by oxidation or by mutagenic agents. Acts as a DNA glycosylase that recognizes and removes damaged bases. Has a preference for oxidized purines, such as 7,8-dihydro-8-oxoguanine (8-oxoG). Has AP (apurinic/apyrimidinic) lyase activity and introduces nicks in the DNA strand. Cleaves the DNA backbone by beta-delta elimination to generate a single-strand break at the site of the removed base with both 3'- and 5'-phosphates. The polypeptide is Formamidopyrimidine-DNA glycosylase (Shewanella loihica (strain ATCC BAA-1088 / PV-4)).